Reading from the N-terminus, the 376-residue chain is PCM7-4 (376 aa).

In terms of biological role, has antibacterial activity against Listeria monocytogenes. The polypeptide is PCM7-4 (Bacillus velezensis).